The primary structure comprises 476 residues: Sulfate adenylyltransferase subunit 1 (476 aa).

The tr-type G domain maps to 24 to 240 (KSLLRFLTCG…LENVDIDRDK (217 aa)). The tract at residues 33 to 40 (GSVDDGKS) is G1. 33–40 (GSVDDGKS) lines the GTP pocket. The segment at 91–95 (GITID) is G2. Positions 112-115 (DTPG) are G3. GTP contacts are provided by residues 112 to 116 (DTPGH) and 167 to 170 (NKMD). The tract at residues 167-170 (NKMD) is G4. The interval 205-207 (SAL) is G5.

It belongs to the TRAFAC class translation factor GTPase superfamily. Classic translation factor GTPase family. CysN/NodQ subfamily. As to quaternary structure, heterodimer composed of CysD, the smaller subunit, and CysN.

It carries out the reaction sulfate + ATP + H(+) = adenosine 5'-phosphosulfate + diphosphate. Its pathway is sulfur metabolism; hydrogen sulfide biosynthesis; sulfite from sulfate: step 1/3. Functionally, with CysD forms the ATP sulfurylase (ATPS) that catalyzes the adenylation of sulfate producing adenosine 5'-phosphosulfate (APS) and diphosphate, the first enzymatic step in sulfur assimilation pathway. APS synthesis involves the formation of a high-energy phosphoric-sulfuric acid anhydride bond driven by GTP hydrolysis by CysN coupled to ATP hydrolysis by CysD. The polypeptide is Sulfate adenylyltransferase subunit 1 (Vibrio cholerae serotype O1 (strain ATCC 39541 / Classical Ogawa 395 / O395)).